The sequence spans 122 residues: Small ribosomal subunit protein uS12 (122 aa).

D89 carries the post-translational modification 3-methylthioaspartic acid.

This sequence belongs to the universal ribosomal protein uS12 family. As to quaternary structure, part of the 30S ribosomal subunit. Contacts proteins S8 and S17. May interact with IF1 in the 30S initiation complex.

Functionally, with S4 and S5 plays an important role in translational accuracy. Interacts with and stabilizes bases of the 16S rRNA that are involved in tRNA selection in the A site and with the mRNA backbone. Located at the interface of the 30S and 50S subunits, it traverses the body of the 30S subunit contacting proteins on the other side and probably holding the rRNA structure together. The combined cluster of proteins S8, S12 and S17 appears to hold together the shoulder and platform of the 30S subunit. This is Small ribosomal subunit protein uS12 from Neorickettsia sennetsu (strain ATCC VR-367 / Miyayama) (Ehrlichia sennetsu).